The primary structure comprises 218 residues: Large ribosomal subunit protein uL3 (218 aa).

It belongs to the universal ribosomal protein uL3 family. As to quaternary structure, part of the 50S ribosomal subunit. Forms a cluster with proteins L14 and L19.

Its function is as follows. One of the primary rRNA binding proteins, it binds directly near the 3'-end of the 23S rRNA, where it nucleates assembly of the 50S subunit. This Corynebacterium efficiens (strain DSM 44549 / YS-314 / AJ 12310 / JCM 11189 / NBRC 100395) protein is Large ribosomal subunit protein uL3.